Consider the following 412-residue polypeptide: Serine hydroxymethyltransferase (412 aa).

(6S)-5,6,7,8-tetrahydrofolate is bound by residues Leu116 and 120 to 122 (GHL). Lys225 bears the N6-(pyridoxal phosphate)lysine mark. (6S)-5,6,7,8-tetrahydrofolate-binding positions include Glu241 and 350–352 (SPF).

This sequence belongs to the SHMT family. In terms of assembly, homodimer. Pyridoxal 5'-phosphate is required as a cofactor.

The protein resides in the cytoplasm. The catalysed reaction is (6R)-5,10-methylene-5,6,7,8-tetrahydrofolate + glycine + H2O = (6S)-5,6,7,8-tetrahydrofolate + L-serine. It functions in the pathway one-carbon metabolism; tetrahydrofolate interconversion. Its pathway is amino-acid biosynthesis; glycine biosynthesis; glycine from L-serine: step 1/1. Its function is as follows. Catalyzes the reversible interconversion of serine and glycine with tetrahydrofolate (THF) serving as the one-carbon carrier. This reaction serves as the major source of one-carbon groups required for the biosynthesis of purines, thymidylate, methionine, and other important biomolecules. Also exhibits THF-independent aldolase activity toward beta-hydroxyamino acids, producing glycine and aldehydes, via a retro-aldol mechanism. This chain is Serine hydroxymethyltransferase, found in Enterococcus faecalis (strain ATCC 700802 / V583).